The following is a 237-amino-acid chain: Golgi anti-apoptotic protein (237 aa).

Over 1-37 the chain is Cytoplasmic; sequence MAMPSLSACSSIEDDFNYGSSVASASVHIRMAFLRKV. Residues 38-58 traverse the membrane as a helical segment; that stretch reads YGILCLQFLLTTATTAVFLYF. The Lumenal portion of the chain corresponds to 59–67; sequence DCMRTFIQG. Residues 68–88 traverse the membrane as a helical segment; that stretch reads SPVLILASMFGSIGLIFALTL. The Cytoplasmic portion of the chain corresponds to 89-94; that stretch reads HRHKHP. The chain crosses the membrane as a helical span at residues 95-115; that stretch reads LNLYLLCGFTLSESLTLASVV. Residue threonine 116 is a topological domain, lumenal. A helical transmembrane segment spans residues 117-137; it reads FYDVHVVMQAFMLTTAAFLAL. Topologically, residues 138 to 151 are cytoplasmic; it reads TTYTLQSKRDFSKL. A helical transmembrane segment spans residues 152–172; the sequence is GAGLFAALWILILSGLLGIFV. Residues 173-174 are Lumenal-facing; that stretch reads QN. A helical membrane pass occupies residues 175–195; sequence ETVKLVLSAFGALVFCGFIIY. Residues 196–209 lie on the Cytoplasmic side of the membrane; that stretch reads DTHSLIHKLSPEEY. Residues 210-230 constitute an intramembrane region (helical); that stretch reads VLASINLYLDIINLFLHLLQL. The Cytoplasmic segment spans residues 231 to 237; that stretch reads LEVSNKK.

It belongs to the BI1 family. LFG subfamily.

It is found in the host Golgi apparatus membrane. Functionally, may affect virulence through inhibition of apoptosis. The polypeptide is Golgi anti-apoptotic protein (L6) (Vaccinia virus (strain LC16m0) (VACV)).